The sequence spans 397 residues: MIEQSLSKPSFSLSIPIPKAPKSKSSFFCSYSKIRCESVDYPSLTKIDAKHPQNSTTINNGSSSSASVDLKNNEKGPYPYPGGGKMGPYTGRDLNEKKPEWLRQRAPQGERFEEVKESISRLNLNTVCQEAQCPNIGECWNGGGDGIATATIMVLGDTCTRGCRFCAVKTSRTPPPPDPMEPLNTALAIASWGVDYIVITSVDRDDLSDGGSGHFAQTVRAMKELKPEIMVECLTSDFRGDLKAVDTLVHSGLDVFAHNVETVKRLQRIVRDPRAGYEQSLSVLKHAKVSKKGMITKTSIMLGLGETDDEVKEAMTDLRAIDVDILTFGQYLQPTPLHLTVKEYVSPEKFAYWKEYGESIGFRYVASGPLVRSSYRAGELFVKTMVKESAKEAAAIS.

The N-terminal 35 residues, 1–35, are a transit peptide targeting the chloroplast; it reads MIEQSLSKPSFSLSIPIPKAPKSKSSFFCSYSKIR. Residues 49 to 85 are disordered; it reads AKHPQNSTTINNGSSSSASVDLKNNEKGPYPYPGGGK. The span at 54–67 shows a compositional bias: low complexity; the sequence is NSTTINNGSSSSAS. 7 residues coordinate [4Fe-4S] cluster: C128, C133, C139, C159, C163, C166, and S374. The region spanning 142 to 363 is the Radical SAM core domain; sequence GGGDGIATAT…KEYGESIGFR (222 aa).

This sequence belongs to the radical SAM superfamily. Lipoyl synthase family. It depends on [4Fe-4S] cluster as a cofactor.

The protein localises to the plastid. Its subcellular location is the chloroplast. It carries out the reaction [[Fe-S] cluster scaffold protein carrying a second [4Fe-4S](2+) cluster] + N(6)-octanoyl-L-lysyl-[protein] + 2 oxidized [2Fe-2S]-[ferredoxin] + 2 S-adenosyl-L-methionine + 4 H(+) = [[Fe-S] cluster scaffold protein] + N(6)-[(R)-dihydrolipoyl]-L-lysyl-[protein] + 4 Fe(3+) + 2 hydrogen sulfide + 2 5'-deoxyadenosine + 2 L-methionine + 2 reduced [2Fe-2S]-[ferredoxin]. Its pathway is protein modification; protein lipoylation via endogenous pathway; protein N(6)-(lipoyl)lysine from octanoyl-[acyl-carrier-protein]: step 2/2. Functionally, catalyzes the radical-mediated insertion of two sulfur atoms into the C-6 and C-8 positions of the octanoyl moiety bound to the lipoyl domains of lipoate-dependent enzymes, thereby converting the octanoylated domains into lipoylated derivatives. This is Lipoyl synthase 2, chloroplastic from Populus trichocarpa (Western balsam poplar).